The primary structure comprises 844 residues: DNA mismatch repair protein MutS (844 aa).

Position 602–609 (602–609 (GPNMSGKS)) interacts with ATP.

This sequence belongs to the DNA mismatch repair MutS family.

In terms of biological role, this protein is involved in the repair of mismatches in DNA. It is possible that it carries out the mismatch recognition step. This protein has a weak ATPase activity. This chain is DNA mismatch repair protein MutS, found in Streptococcus pneumoniae (strain ATCC 700669 / Spain 23F-1).